Here is a 188-residue protein sequence, read N- to C-terminus: Trafficking protein particle complex subunit 5 (188 aa).

Ser-10 bears the Phosphoserine mark.

It belongs to the TRAPP small subunits family. BET3 subfamily. Component of the multisubunit TRAPP (transport protein particle) complex, which includes at least TRAPPC2, TRAPPC2L, TRAPPC3, TRAPPC3L, TRAPPC4, TRAPPC5, TRAPPC8, TRAPPC9, TRAPPC10, TRAPPC11 and TRAPPC12.

Its subcellular location is the golgi apparatus. The protein localises to the cis-Golgi network. The protein resides in the endoplasmic reticulum. In terms of biological role, may play a role in vesicular transport from endoplasmic reticulum to Golgi. The chain is Trafficking protein particle complex subunit 5 (Trappc5) from Mus musculus (Mouse).